A 129-amino-acid polypeptide reads, in one-letter code: Small ribosomal subunit protein uS11 (129 aa).

Belongs to the universal ribosomal protein uS11 family. Part of the 30S ribosomal subunit. Interacts with proteins S7 and S18. Binds to IF-3.

Located on the platform of the 30S subunit, it bridges several disparate RNA helices of the 16S rRNA. Forms part of the Shine-Dalgarno cleft in the 70S ribosome. This is Small ribosomal subunit protein uS11 from Rhodopseudomonas palustris (strain HaA2).